We begin with the raw amino-acid sequence, 430 residues long: 4-hydroxy-3-methylbut-2-en-1-yl diphosphate synthase (flavodoxin) (430 aa).

Residues Cys-310, Cys-313, Cys-356, and Glu-363 each contribute to the [4Fe-4S] cluster site.

Belongs to the IspG family. Requires [4Fe-4S] cluster as cofactor.

It catalyses the reaction (2E)-4-hydroxy-3-methylbut-2-enyl diphosphate + oxidized [flavodoxin] + H2O + 2 H(+) = 2-C-methyl-D-erythritol 2,4-cyclic diphosphate + reduced [flavodoxin]. Its pathway is isoprenoid biosynthesis; isopentenyl diphosphate biosynthesis via DXP pathway; isopentenyl diphosphate from 1-deoxy-D-xylulose 5-phosphate: step 5/6. Its function is as follows. Converts 2C-methyl-D-erythritol 2,4-cyclodiphosphate (ME-2,4cPP) into 1-hydroxy-2-methyl-2-(E)-butenyl 4-diphosphate. In Nitrobacter winogradskyi (strain ATCC 25391 / DSM 10237 / CIP 104748 / NCIMB 11846 / Nb-255), this protein is 4-hydroxy-3-methylbut-2-en-1-yl diphosphate synthase (flavodoxin).